The following is a 611-amino-acid chain: Putative clathrin assembly protein At4g02650 (611 aa).

Positions 26-162 constitute an ENTH domain; sequence GRSSSLTELE…DYRMQGRRGK (137 aa). Disordered stretches follow at residues 158–184 and 337–406; these read GRRG…HRGT and TTKS…GDLL. The segment covering 386-401 has biased composition (basic and acidic residues); the sequence is METKKDVEEVVSRQDQ.

It localises to the membrane. It is found in the clathrin-coated pit. The protein localises to the golgi apparatus. Its subcellular location is the cytoplasmic vesicle. The protein resides in the clathrin-coated vesicle. This chain is Putative clathrin assembly protein At4g02650, found in Arabidopsis thaliana (Mouse-ear cress).